A 309-amino-acid chain; its full sequence is MELENDTRIPEFLLLGFSEEPKLQPFLFGLFLSMYLVTILGNLLLILAVSSDSHLHTPMYFFLANLSFVDICFTCTTIPKMLVNIQTQRKVITYESCIIQMYFFELFAGIDNFLLTVMAYDRYMAICYPLHYMVIMNPQLCSLLLLVSWIMSALHSLLQTLMVLRLSFCTHFQIPHFFCELNQMIQLACSDTFLNNMMLYFAAILLGVAPLVGVLYSYFKIVSSIRGISSAHSKYKAFSTCASHLSVVSLFYCTSLGVYLSSAAPQSTHTSSVASVMYTVVTPMLNPFIYSLRNKDIKGALNVFFRGKP.

The Extracellular portion of the chain corresponds to Met1–Pro25. The N-linked (GlcNAc...) asparagine glycan is linked to Asn5. The helical transmembrane segment at Phe26–Val49 threads the bilayer. Over Ser50–Thr57 the chain is Cytoplasmic. The chain crosses the membrane as a helical span at residues Pro58–Pro79. At Lys80–Gln100 the chain is on the extracellular side. Residues Met101–Tyr120 traverse the membrane as a helical segment. The Cytoplasmic segment spans residues Asp121 to Gln139. The helical transmembrane segment at Leu140 to Leu158 threads the bilayer. Over Gln159 to Asn196 the chain is Extracellular. Residues Met197–Phe219 form a helical membrane-spanning segment. Over Lys220–Lys236 the chain is Cytoplasmic. Residues Ala237 to Leu260 traverse the membrane as a helical segment. The Extracellular segment spans residues Ser261–Ser272. Residues Val273–Leu292 form a helical membrane-spanning segment. Over Arg293–Pro309 the chain is Cytoplasmic.

This sequence belongs to the G-protein coupled receptor 1 family.

The protein localises to the cell membrane. Its function is as follows. Putative odorant or sperm cell receptor. The protein is Olfactory receptor-like protein OLF4 of Canis lupus familiaris (Dog).